A 461-amino-acid chain; its full sequence is A-type ATP synthase subunit B (461 aa).

It belongs to the ATPase alpha/beta chains family. As to quaternary structure, has multiple subunits with at least A(3), B(3), C, D, E, F, H, I and proteolipid K(x).

It localises to the cell membrane. Component of the A-type ATP synthase that produces ATP from ADP in the presence of a proton gradient across the membrane. The B chain is a regulatory subunit. This Methanoculleus marisnigri (strain ATCC 35101 / DSM 1498 / JR1) protein is A-type ATP synthase subunit B.